The primary structure comprises 603 residues: Glutathione-regulated potassium-efflux system protein KefB (603 aa).

Helical transmembrane passes span alanine 5 to alanine 25, isoleucine 29 to phenylalanine 49, alanine 55 to leucine 75, isoleucine 87 to tyrosine 107, serine 115 to methionine 135, valine 152 to glycine 172, tryptophan 180 to arginine 202, phenylalanine 207 to glycine 227, leucine 230 to leucine 250, glycine 268 to tyrosine 288, isoleucine 291 to phenylalanine 311, phenylalanine 326 to serine 346, and proline 356 to isoleucine 376. An RCK N-terminal domain is found at glutamate 400–serine 521.

Belongs to the monovalent cation:proton antiporter 2 (CPA2) transporter (TC 2.A.37) family. KefB subfamily. In terms of assembly, interacts with the regulatory subunit KefG.

It is found in the cell inner membrane. In terms of biological role, pore-forming subunit of a potassium efflux system that confers protection against electrophiles. Catalyzes K(+)/H(+) antiport. In Pectobacterium carotovorum subsp. carotovorum (strain PC1), this protein is Glutathione-regulated potassium-efflux system protein KefB.